Here is a 419-residue protein sequence, read N- to C-terminus: Acetyltransferase fsoF (419 aa).

A glycan (N-linked (GlcNAc...) asparagine) is linked at Asn2. The next 2 helical transmembrane spans lie at 4–24 and 62–82; these read TIISLALIFFQLTTTALVVGF and AFLGAASVFLVILYVDAAILS. A disordered region spans residues 89 to 114; sequence QSPTSSLGGLIPPTTRDTPKTQNNAT. N-linked (GlcNAc...) asparagine glycosylation is found at Asn112 and Asn169. 4 consecutive transmembrane segments (helical) span residues 230-250, 314-334, 337-357, and 386-406; these read YWAIQYAVIDLLYSLLAVVAV, YVFMTLVFAVSGVFHTLSDVS, IPLGESGAMRFFVLQAIGIML, and VSGPVWLVTWLTWTSPGWIYM.

This sequence belongs to the wax synthase family.

The protein resides in the membrane. The enzyme catalyses 3-O-(beta-D-glucopyranosyl)-2alpha-hydroxyisomotiol + acetyl-CoA = 3-O-(beta-D-glucopyranosyl)-2alpha-acetoxyisomotiol + CoA. It catalyses the reaction 2-deacetylfuscoatroside + acetyl-CoA = fuscoatroside + CoA. It functions in the pathway secondary metabolite biosynthesis; terpenoid biosynthesis. In terms of biological role, terpene cyclase-glycosyl transferase fusion protein; part of the gene cluster that mediates the biosynthesis of the enfumafungin-type antibiotic, fuscoatroside. Within the pathway, fsoF catalyzes the acetylation of C2-alpha-OH following the C2 hydroxylation by the cytochrome monooxygenase fsoD. The fuscoatroside biosynthesis is initiated by the cyclization of 2,3(S)-oxidosqualene through FsoA's terpene cyclase (TC) domain, leading to the formation of the fernane skeleton isomotiol, harboring a fernane triterpene skeleton with a C8-C9 double bond. Subsequently, C2-alpha-hydroxylation mediated by fsoD results in the production of 2-alpha-hydroxy-isomotiol, which is further acetylated by fsoF. The glycosyltransferase (GT) domain of FsoA may convert isomotiol, 2-alpha-hydroxy-isomotiol, and the acetylated derivative of 2-alpha-hydroxy-isomotiol into their corresponding glycosides 3-O-(beta-D-glucopyranosyl)-isomotiol, 3-O-(beta-D-glucopyranosyl)-2-alpha-hydroxy-isomotiol, and 3-O-(beta-D-glucopyranosyl)-2-alpha-acetoxy-isomotiol, which then undergo oxidative cleavage under the action of fsoE to form s 2-deacetoxy-fuscoatroside, 2-deacetyl-fuscoatroside, and fuscoatroside, respectively. Although hydroxylation followed by acetylation of 3-O-(beta-D-glucopyranosyl)-isomotiol and 2-deacetoxy-fuscoatroside by fsoD and fsoF could not be ruled out, this process is likely to occur with difficulty due to bulky steric hindrance caused by the presence of a glycan at C3 in these compounds. Interestingly, fsoE can also utilize the aglycones isomotiol and 2-alpha-hydroxy-isomotiol as substrates to generate 19-beta-hydroxy-isomotiol and 2-alpha,19-beta-dihydroxy-isomotiol, respectively. These reactions occur with lower efficiency. Finally, fsoE can further convert 2-alpha,19-beta-dihydroxy-isomotiol into 2-alpha-hydroxy-ismotiol-19-one and 2-alpha-hydroxy-ismotiol-19-one into 2-deacetyl-3-deglucopyranosyl-fuscoatroside. This Humicola fuscoatra protein is Acetyltransferase fsoF.